The chain runs to 929 residues: Probable LRR receptor-like serine/threonine-protein kinase At1g67720 (929 aa).

The N-terminal stretch at 1-21 is a signal peptide; sequence MGLCLAQLAVTCLFLVPFVLS. Topologically, residues 22–531 are extracellular; the sequence is QVTEFVSIDC…NEAQRKHFWQ (510 aa). 7 N-linked (GlcNAc...) asparagine glycosylation sites follow: Asn-36, Asn-173, Asn-236, Asn-293, Asn-320, Asn-332, and Asn-407. LRR repeat units lie at residues 413–437, 438–460, 461–484, and 485–508; these read PPRV…INYM, EALT…MSKL, VNLK…LAHL, and PNLQ…LLKG. N-linked (GlcNAc...) asparagine glycosylation occurs at Asn-494. Residues 532–552 traverse the membrane as a helical segment; the sequence is ILGISIAAVAILLLLVGGSLV. Topologically, residues 553-929 are cytoplasmic; the sequence is LLCALRKTKR…SRNSLAPAAR (377 aa). In terms of domain architecture, Protein kinase spans 606–880; that stretch reads DNFSKKVGRG…EVIVAIQDAI (275 aa). ATP contacts are provided by residues 612 to 620 and Lys-634; that span reads VGRGSFGSV. The residue at position 679 (Tyr-679) is a Phosphotyrosine. Asp-731 functions as the Proton acceptor in the catalytic mechanism. 2 positions are modified to phosphoserine: Ser-735 and Ser-764. The residue at position 770 (Thr-770) is a Phosphothreonine. Tyr-778 carries the post-translational modification Phosphotyrosine.

It belongs to the protein kinase superfamily. Ser/Thr protein kinase family.

It is found in the membrane. It carries out the reaction L-seryl-[protein] + ATP = O-phospho-L-seryl-[protein] + ADP + H(+). It catalyses the reaction L-threonyl-[protein] + ATP = O-phospho-L-threonyl-[protein] + ADP + H(+). This Arabidopsis thaliana (Mouse-ear cress) protein is Probable LRR receptor-like serine/threonine-protein kinase At1g67720.